Here is a 1004-residue protein sequence, read N- to C-terminus: MSRRKQRRPQQLISDCEGPSASENGDASEEDHPQVCAKCCAQFSDPTEFLAHQNSCCTDPPVMVIIGGQENPSNSSASSAPRPEGHSRSQVMDTEHSNPPDSGSSGAPDPTWGPERRGEESSGQFLVAATGTAAGGGGGLILASPKLGATPLPPESTPAPPPPPPPPPPPGVGSGHLNIPLILEELRVLQQRQIHQMQMTEQICRQVLLLGSLGQTVGAPASPSELPGTGAASSTKPLLPLFSPIKPAQTGKTLASSSSSSSSSGAEPPKQAFFHLYHPLGSQHPFSVGGVGRSHKPTPAPSPALPGSTDQLIASPHLAFPGTTGLLAAQCLGAARGLEAAASPGLLKPKNGSGELGYGEVISSLEKPGGRHKCRFCAKVFGSDSALQIHLRSHTGERPYKCNVCGNRFTTRGNLKVHFHRHREKYPHVQMNPHPVPEHLDYVITSSGLPYGMSVPPEKAEEEAGTPGGGVERKPLVASTTALSATESLTLLSTGTSTAVAPGLPTFNKFVLMKAVEPKSKADENTPPGSEGSAIAGVADSGSATRMQLSKLVTSLPSWALLTNHLKSTGSFPFPYVLEPLGASPSETSKLQQLVEKIDRQGAVAVASTASGAPTTSAPAPSSSASGPNQCVICLRVLSCPRALRLHYGQHGGERPFKCKVCGRAFSTRGNLRAHFVGHKTSPAARAQNSCPICQKKFTNAVTLQQHVRMHLGGQIPNGGSALSEGGGAAQENSSEQSTASGPGSFPQPQSQQPSPEEEMSEEEEEDEEEEEDVTDEDSLAGRGSESGGEKAISVRGDSEEVSGAEEEVATSVAAPTTVKEMDSNEKAPQHTLPPPPPPPDNLDHPQPMEQGTSDVSGAMEEEAKLEGTSSPMAALTQEGEGTSTPLVEELNLPEAMKKDPGESSGRKACEVCGQSFPTQTALEEHQKTHPKDGPLFTCVFCRQGFLDRATLKKHMLLAHHQVPPFAPHGPQNIATLSLVPGCSSSIPSPGLSPFPRKDDPTMP.

Disordered regions lie at residues 1–33 (MSRR…EDHP), 51–122 (AHQN…EESS), 137–177 (GGGL…SGHL), 220–270 (PASP…EPPK), and 285–307 (PFSV…ALPG). The segment at 34–56 (QVCAKCCAQFSDPTEFLAHQNSC) adopts a C2H2-type 1; atypical zinc-finger fold. Positions 71–81 (NPSNSSASSAP) are enriched in low complexity. Basic and acidic residues predominate over residues 83-98 (PEGHSRSQVMDTEHSN). A compositionally biased stretch (low complexity) spans 99–110 (PPDSGSSGAPDP). Residues 151 to 171 (PLPPESTPAPPPPPPPPPPPG) show a composition bias toward pro residues. S243 carries the post-translational modification Phosphoserine. C2H2-type zinc fingers lie at residues 372-394 (HKCR…LRSH), 400-422 (YKCN…FHRH), 629-651 (NQCV…YGQH), 657-679 (FKCK…FVGH), and 689-711 (NSCP…VRMH). A disordered region spans residues 712–910 (LGGQIPNGGS…PGESSGRKAC (199 aa)). Polar residues predominate over residues 731–742 (QENSSEQSTASG). Positions 756–779 (PEEEMSEEEEEDEEEEEDVTDEDS) are enriched in acidic residues. A phosphoserine mark is found at S794, S799, and S803. Residues 800–809 (EEVSGAEEEV) are compositionally biased toward acidic residues. Low complexity predominate over residues 810 to 819 (ATSVAAPTTV). Positions 820 to 829 (KEMDSNEKAP) are enriched in basic and acidic residues. A compositionally biased stretch (pro residues) spans 832–841 (TLPPPPPPPD). Residues 896-910 (AMKKDPGESSGRKAC) show a composition bias toward basic and acidic residues. Residue K908 forms a Glycyl lysine isopeptide (Lys-Gly) (interchain with G-Cter in ubiquitin) linkage. C2H2-type zinc fingers lie at residues 908-930 (KACE…QKTH) and 937-961 (FTCV…LAHH).

The protein belongs to the sal C2H2-type zinc-finger protein family. Expressed throughout embryonic development. In adult predominantly in brain.

It is found in the nucleus. Functionally, probable transcription factor that plays a role in eye development before, during, and after optic fissure closure. This is Sal-like protein 2 (Sall2) from Mus musculus (Mouse).